A 78-amino-acid polypeptide reads, in one-letter code: SVHHQDSSDEPSESSHPCCDLCLCTKSIPPQCQCADIRLDSCHSACKSCMCTRSMPGQCRCLDTHDFCHKPCKSRDKD.

7 disulfides stabilise this stretch: cysteine 18/cysteine 72, cysteine 19/cysteine 34, cysteine 22/cysteine 68, cysteine 24/cysteine 32, cysteine 42/cysteine 49, cysteine 46/cysteine 61, and cysteine 51/cysteine 59.

The protein belongs to the Bowman-Birk serine protease inhibitor family.

Its function is as follows. These inhibitors strongly inhibit trypsin. This chain is Bowman-Birk type proteinase inhibitors I-A, I-B, and I-A', found in Phaseolus angularis (Azuki bean).